A 126-amino-acid polypeptide reads, in one-letter code: Small ribosomal subunit protein bS6 (126 aa).

The interval Q104–A126 is disordered.

This sequence belongs to the bacterial ribosomal protein bS6 family.

Binds together with bS18 to 16S ribosomal RNA. The sequence is that of Small ribosomal subunit protein bS6 from Coxiella burnetii (strain Dugway 5J108-111).